A 279-amino-acid polypeptide reads, in one-letter code: Glutamate racemase (279 aa).

Residues 13–14 and 45–46 contribute to the substrate site; these read DS and YG. The Proton donor/acceptor role is filled by Cys-76. Position 77 to 78 (77 to 78) interacts with substrate; sequence NT. The active-site Proton donor/acceptor is the Cys-185. 186–187 serves as a coordination point for substrate; that stretch reads TH.

It belongs to the aspartate/glutamate racemases family.

It carries out the reaction L-glutamate = D-glutamate. The protein operates within cell wall biogenesis; peptidoglycan biosynthesis. Its function is as follows. Provides the (R)-glutamate required for cell wall biosynthesis. The chain is Glutamate racemase from Picosynechococcus sp. (strain ATCC 27264 / PCC 7002 / PR-6) (Agmenellum quadruplicatum).